The chain runs to 2118 residues: Separin (2118 aa).

S1121 bears the Phosphoserine mark. A compositionally biased stretch (basic residues) spans 1309–1318 (KCSGRGRRRI). Residues 1309-1352 (KCSGRGRRRIASVPPPLHNSSQKGLEEEGPPCTPKPPGRARQAG) form a disordered region. 2 positions are modified to phosphoserine: S1391 and S1394. Residues 1408–1428 (EEPKRRGTASRTRGQTRKGRS) form a disordered region. Residue S1504 is modified to Phosphoserine. The Peptidase C50 domain occupies 1941–2036 (PQNTFYVLNP…SAALAVHGNL (96 aa)). The active site involves C2025.

In terms of assembly, interacts with PTTG1. Interacts with RAD21. In terms of processing, autocleaves. This function, which is not essential for its protease activity, is unknown. Post-translationally, phosphorylated by CDK1. There is 8 Ser/Thr phosphorylation sites. Among them, only Ser-1121 phosphorylation is the major site, which conducts to the enzyme inactivation.

The protein localises to the cytoplasm. Its subcellular location is the nucleus. The enzyme catalyses All bonds known to be hydrolyzed by this endopeptidase have arginine in P1 and an acidic residue in P4. P6 is often occupied by an acidic residue or by a hydroxy-amino-acid residue, the phosphorylation of which enhances cleavage.. Its activity is regulated as follows. Regulated by at least two independent mechanisms. First, it is inactivated via its interaction with securin/PTTG1, which probably covers its active site. The association with PTTG1 is not only inhibitory, since PTTG1 is also required for activating it, the enzyme being inactive in cells in which PTTG1 is absent. PTTG1 degradation at anaphase, liberates it and triggers RAD21 cleavage. Second, phosphorylation at Ser-1121 inactivates it. The complete phosphorylation during mitosis, is removed when cells undergo anaphase. Activation of the enzyme at the metaphase-anaphase transition probably requires the removal of both securin and inhibitory phosphate. Functionally, caspase-like protease, which plays a central role in the chromosome segregation by cleaving the SCC1/RAD21 subunit of the cohesin complex at the onset of anaphase. During most of the cell cycle, it is inactivated by different mechanisms. This Mus musculus (Mouse) protein is Separin (Espl1).